The following is a 119-amino-acid chain: UPF0102 protein SGR_1878 (119 aa).

Belongs to the UPF0102 family.

The sequence is that of UPF0102 protein SGR_1878 from Streptomyces griseus subsp. griseus (strain JCM 4626 / CBS 651.72 / NBRC 13350 / KCC S-0626 / ISP 5235).